Consider the following 590-residue polypeptide: uncharacterized protein (590 aa).

Residues Met-1–Tyr-68 are Cytoplasmic-facing. The helical transmembrane segment at Val-69–Val-89 threads the bilayer. Residues Glu-90–Ser-94 lie on the Extracellular side of the membrane. A helical membrane pass occupies residues Trp-95–Ile-115. At Ala-116–His-124 the chain is on the cytoplasmic side. The chain crosses the membrane as a helical span at residues Ile-125–Leu-145. Residues Asn-146 to Val-149 are Extracellular-facing. Residues Met-150–Ile-170 traverse the membrane as a helical segment. Residues Arg-171–Trp-194 lie on the Cytoplasmic side of the membrane. A helical transmembrane segment spans residues Val-195–Ile-215. Residues Arg-216 to Leu-218 lie on the Extracellular side of the membrane. The chain crosses the membrane as a helical span at residues Phe-219–Val-239. Over Lys-240–Asn-258 the chain is Cytoplasmic. The chain crosses the membrane as a helical span at residues His-259 to Val-279. Topologically, residues Asn-280–Gln-298 are extracellular. The chain crosses the membrane as a helical span at residues Leu-299 to Ala-319. Residues Ser-320–Arg-390 are Cytoplasmic-facing. A helical transmembrane segment spans residues Gly-391–Ser-411. Residues Asn-412 to Leu-418 lie on the Extracellular side of the membrane. Residues Ser-419–Ile-439 form a helical membrane-spanning segment. At Arg-440 to Arg-467 the chain is on the cytoplasmic side. Residues Ala-468–Gly-488 traverse the membrane as a helical segment. At Asp-489 to Asn-500 the chain is on the extracellular side. A helical transmembrane segment spans residues Ile-501–Phe-521. At Pro-522–Phe-590 the chain is on the cytoplasmic side. A disordered region spans residues Val-566–Phe-590.

The protein belongs to the purine-cytosine permease (2.A.39) family.

It is found in the cytoplasm. The protein localises to the nucleus. The protein resides in the membrane. This is an uncharacterized protein from Schizosaccharomyces pombe (strain 972 / ATCC 24843) (Fission yeast).